Here is a 148-residue protein sequence, read N- to C-terminus: Putative pre-16S rRNA nuclease (148 aa).

Belongs to the YqgF nuclease family.

The protein localises to the cytoplasm. In terms of biological role, could be a nuclease involved in processing of the 5'-end of pre-16S rRNA. The sequence is that of Putative pre-16S rRNA nuclease from Chromohalobacter salexigens (strain ATCC BAA-138 / DSM 3043 / CIP 106854 / NCIMB 13768 / 1H11).